A 271-amino-acid chain; its full sequence is MVVAKKSLGQHFLTDESFLDRIVNALPPLNPLKLIEIGVGLGDLTLKLLDRYPLKTYEIDSNLCEKMRARLKAQKKPFQLELVEKDALFLKEEEPYFLISNLPYYIATRLVLNALKDPKCRGLLVMTQKEVALKFCTKDSQNALSVLVHTIGNATLLFDVPPSAFSPPPKVFSSVFEVIKEPLKEKALASLLQAPFFEEALQKGFETLEDFLKACFSSPRKTLSNNLKKSVSYREKLDKVLDFLALENQPTSVRASEIKDYLKLLEYLLKG.

Residues His11, Leu13, Gly38, Glu58, Asp86, and Asn101 each coordinate S-adenosyl-L-methionine.

Belongs to the class I-like SAM-binding methyltransferase superfamily. rRNA adenine N(6)-methyltransferase family. RsmA subfamily.

It is found in the cytoplasm. It catalyses the reaction adenosine(1518)/adenosine(1519) in 16S rRNA + 4 S-adenosyl-L-methionine = N(6)-dimethyladenosine(1518)/N(6)-dimethyladenosine(1519) in 16S rRNA + 4 S-adenosyl-L-homocysteine + 4 H(+). Functionally, specifically dimethylates two adjacent adenosines (A1518 and A1519) in the loop of a conserved hairpin near the 3'-end of 16S rRNA in the 30S particle. May play a critical role in biogenesis of 30S subunits. The protein is Ribosomal RNA small subunit methyltransferase A of Helicobacter pylori (strain G27).